Consider the following 806-residue polypeptide: Glycerol-3-phosphate acyltransferase (806 aa).

Positions 305–310 (CHRSHM) match the HXXXXD motif motif.

The protein belongs to the GPAT/DAPAT family.

Its subcellular location is the cell inner membrane. The catalysed reaction is sn-glycerol 3-phosphate + an acyl-CoA = a 1-acyl-sn-glycero-3-phosphate + CoA. Its pathway is phospholipid metabolism; CDP-diacylglycerol biosynthesis; CDP-diacylglycerol from sn-glycerol 3-phosphate: step 1/3. This Enterobacter sp. (strain 638) protein is Glycerol-3-phosphate acyltransferase.